A 145-amino-acid polypeptide reads, in one-letter code: Histone H2B.1, sperm (145 aa).

A disordered region spans residues 1 to 52; that stretch reads MPSQKSPTKRSPTKRSPTKRSPQKGGKGGKGAKRGGKAGKRRRGVQVKRRRR. 4 short sequence motifs (SPKK motif) span residues 6–9, 11–14, 16–19, and 21–24; these read SPTK and SPQK. 2 stretches are compositionally biased toward basic residues: residues 7 to 22 and 30 to 52; these read PTKR…KRSP and KGAK…RRRR. Phosphoserine is present on residues Ser16 and Ser21. A glycan (O-linked (GlcNAc) serine) is linked at Ser132. A Glycyl lysine isopeptide (Lys-Gly) (interchain with G-Cter in ubiquitin) cross-link involves residue Lys140.

The protein belongs to the histone H2B family. As to quaternary structure, the nucleosome is a histone octamer containing two molecules each of H2A, H2B, H3 and H4 assembled in one H3-H4 heterotetramer and two H2A-H2B heterodimers. The octamer wraps approximately 147 bp of DNA. In terms of processing, monoubiquitination of Lys-140 gives a specific tag for epigenetic transcriptional activation and is also prerequisite for histone H3 'Lys-4' and 'Lys-79' methylation. Post-translationally, phosphorylated on SPKK motifs 3 and 4; which may regulate DNA binding. Dephosphorylated during maturation of spermatids to mature sperm and rephosphorylated at fertilization. GlcNAcylation at Ser-132 promotes monoubiquitination of Lys-140. It fluctuates in response to extracellular glucose, and associates with transcribed genes.

It localises to the nucleus. Its subcellular location is the chromosome. Core component of nucleosome. Nucleosomes wrap and compact DNA into chromatin, limiting DNA accessibility to the cellular machineries which require DNA as a template. Histones thereby play a central role in transcription regulation, DNA repair, DNA replication and chromosomal stability. DNA accessibility is regulated via a complex set of post-translational modifications of histones, also called histone code, and nucleosome remodeling. In Parechinus angulosus (Angulate sea urchin), this protein is Histone H2B.1, sperm.